Here is a 493-residue protein sequence, read N- to C-terminus: Cobyric acid synthase (493 aa).

The GATase cobBQ-type domain maps to 246–440 (PIDIAVIKMP…IHGVFDGVAF (195 aa)). The Nucleophile role is filled by Cys-326. His-432 is an active-site residue.

It belongs to the CobB/CobQ family. CobQ subfamily.

Its pathway is cofactor biosynthesis; adenosylcobalamin biosynthesis. Functionally, catalyzes amidations at positions B, D, E, and G on adenosylcobyrinic A,C-diamide. NH(2) groups are provided by glutamine, and one molecule of ATP is hydrogenolyzed for each amidation. This chain is Cobyric acid synthase, found in Clostridium botulinum (strain Loch Maree / Type A3).